Here is a 395-residue protein sequence, read N- to C-terminus: Hdr-like menaquinol oxidoreductase integral membrane subunit (395 aa).

The next 10 membrane-spanning stretches (helical) occupy residues 15–35 (YFALVIILAAVTALGFYAYVL), 57–77 (IPYFIGLSAGSLIVSALAGVF), 88–108 (IAAYMAAAWIIAAILSIALDI), 126–146 (IFSWNAFLYSSYFVICSIYLL), 158–178 (FMAGLAVFWAVLVHSGTGAIY), 196–216 (FIVCAITSGLGLLLANLYFTF), 231–251 (LALIFAGLMMVLGYFLAVEGL), 274–294 (VFWSFWLLVIFGIAIPIIIVL), 305–325 (ITFAGILHAALVFAERFYLII), and 364–384 (IGLIAMVYLIFVVGVKLFALI).

The protein belongs to the NrfD family. In terms of assembly, consists of five subunits: an integral membrane subunit, a cytochrome b-like subunit, a cytochrome c subunit and two iron-sulfur subunits.

It localises to the cell membrane. Has menaquinol-oxidizing activity. HmeB subunit may function as a menaquinol-oxidizing site. HmeA, HmeB and HmeE subunits may together catalyze electron transfer from menaquinol to cytochrome c. The polypeptide is Hdr-like menaquinol oxidoreductase integral membrane subunit (hmeB) (Archaeoglobus fulgidus (strain ATCC 49558 / DSM 4304 / JCM 9628 / NBRC 100126 / VC-16)).